The sequence spans 196 residues: Probable malonic semialdehyde reductase RutE (196 aa).

This sequence belongs to the nitroreductase family. HadB/RutE subfamily. It depends on FMN as a cofactor.

It catalyses the reaction 3-hydroxypropanoate + NADP(+) = 3-oxopropanoate + NADPH + H(+). Functionally, may reduce toxic product malonic semialdehyde to 3-hydroxypropionic acid, which is excreted. In Escherichia coli O81 (strain ED1a), this protein is Probable malonic semialdehyde reductase RutE.